We begin with the raw amino-acid sequence, 190 residues long: UPF0301 protein Reut_A0705 (190 aa).

This sequence belongs to the UPF0301 (AlgH) family.

The sequence is that of UPF0301 protein Reut_A0705 from Cupriavidus pinatubonensis (strain JMP 134 / LMG 1197) (Cupriavidus necator (strain JMP 134)).